A 212-amino-acid polypeptide reads, in one-letter code: Pyridoxine/pyridoxamine 5'-phosphate oxidase (212 aa).

Substrate is bound by residues R7–Y10 and K65. Residues R60–K65, F75–T76, K82, and Q104 contribute to the FMN site. Substrate is bound by residues Y122, R126, and S130. FMN is bound by residues Q139 to S140 and W184. R190–H192 serves as a coordination point for substrate. R194 lines the FMN pocket.

This sequence belongs to the pyridoxamine 5'-phosphate oxidase family. Homodimer. FMN serves as cofactor.

It carries out the reaction pyridoxamine 5'-phosphate + O2 + H2O = pyridoxal 5'-phosphate + H2O2 + NH4(+). The enzyme catalyses pyridoxine 5'-phosphate + O2 = pyridoxal 5'-phosphate + H2O2. Its pathway is cofactor metabolism; pyridoxal 5'-phosphate salvage; pyridoxal 5'-phosphate from pyridoxamine 5'-phosphate: step 1/1. It functions in the pathway cofactor metabolism; pyridoxal 5'-phosphate salvage; pyridoxal 5'-phosphate from pyridoxine 5'-phosphate: step 1/1. Its function is as follows. Catalyzes the oxidation of either pyridoxine 5'-phosphate (PNP) or pyridoxamine 5'-phosphate (PMP) into pyridoxal 5'-phosphate (PLP). The sequence is that of Pyridoxine/pyridoxamine 5'-phosphate oxidase from Rippkaea orientalis (strain PCC 8801 / RF-1) (Cyanothece sp. (strain PCC 8801)).